The sequence spans 182 residues: Glycerol-3-phosphate acyltransferase 1 (182 aa).

5 helical membrane passes run 5 to 25 (MQFL…AYIV), 54 to 74 (GYFI…VSIA), 81 to 101 (STFV…PIVF), 117 to 137 (IAFD…FYLI), and 157 to 177 (ILYS…VLIL).

This sequence belongs to the PlsY family. Probably interacts with PlsX.

Its subcellular location is the cell membrane. It carries out the reaction an acyl phosphate + sn-glycerol 3-phosphate = a 1-acyl-sn-glycero-3-phosphate + phosphate. It functions in the pathway lipid metabolism; phospholipid metabolism. Functionally, catalyzes the transfer of an acyl group from acyl-phosphate (acyl-PO(4)) to glycerol-3-phosphate (G3P) to form lysophosphatidic acid (LPA). This enzyme utilizes acyl-phosphate as fatty acyl donor, but not acyl-CoA or acyl-ACP. This chain is Glycerol-3-phosphate acyltransferase 1, found in Bacillus cereus (strain ATCC 10987 / NRS 248).